Reading from the N-terminus, the 418-residue chain is UDP-N-acetylglucosamine 1-carboxyvinyltransferase (418 aa).

22–23 (KN) contributes to the phosphoenolpyruvate binding site. Arg91 is a UDP-N-acetyl-alpha-D-glucosamine binding site. Catalysis depends on Cys115, which acts as the Proton donor. Cys115 bears the 2-(S-cysteinyl)pyruvic acid O-phosphothioketal mark. The UDP-N-acetyl-alpha-D-glucosamine site is built by Asp303 and Ile325.

Belongs to the EPSP synthase family. MurA subfamily.

The protein resides in the cytoplasm. The catalysed reaction is phosphoenolpyruvate + UDP-N-acetyl-alpha-D-glucosamine = UDP-N-acetyl-3-O-(1-carboxyvinyl)-alpha-D-glucosamine + phosphate. Its pathway is cell wall biogenesis; peptidoglycan biosynthesis. Its function is as follows. Cell wall formation. Adds enolpyruvyl to UDP-N-acetylglucosamine. In Syntrophobacter fumaroxidans (strain DSM 10017 / MPOB), this protein is UDP-N-acetylglucosamine 1-carboxyvinyltransferase.